Here is a 472-residue protein sequence, read N- to C-terminus: Adenosylhomocysteinase (472 aa).

3 residues coordinate substrate: threonine 61, aspartate 136, and glutamate 196. NAD(+) is bound at residue 197-199 (TTT). Substrate-binding residues include lysine 226 and aspartate 230. Residues asparagine 231, 260 to 265 (GYGDVG), glutamate 283, asparagine 318, 339 to 341 (IGH), and asparagine 384 each bind NAD(+).

It belongs to the adenosylhomocysteinase family. NAD(+) serves as cofactor.

The protein localises to the cytoplasm. The catalysed reaction is S-adenosyl-L-homocysteine + H2O = L-homocysteine + adenosine. Its pathway is amino-acid biosynthesis; L-homocysteine biosynthesis; L-homocysteine from S-adenosyl-L-homocysteine: step 1/1. Its function is as follows. May play a key role in the regulation of the intracellular concentration of adenosylhomocysteine. This chain is Adenosylhomocysteinase, found in Cupriavidus necator (strain ATCC 17699 / DSM 428 / KCTC 22496 / NCIMB 10442 / H16 / Stanier 337) (Ralstonia eutropha).